We begin with the raw amino-acid sequence, 481 residues long: Proline--tRNA ligase 2 (481 aa).

The protein belongs to the class-II aminoacyl-tRNA synthetase family. ProS type 3 subfamily. Homodimer.

Its subcellular location is the cytoplasm. It carries out the reaction tRNA(Pro) + L-proline + ATP = L-prolyl-tRNA(Pro) + AMP + diphosphate. Catalyzes the attachment of proline to tRNA(Pro) in a two-step reaction: proline is first activated by ATP to form Pro-AMP and then transferred to the acceptor end of tRNA(Pro). The sequence is that of Proline--tRNA ligase 2 from Clostridioides difficile (strain 630) (Peptoclostridium difficile).